The primary structure comprises 277 residues: Ras suppressor protein 1 (277 aa).

The tract at residues 1 to 24 (MSKSLKKLVEESREKNQPEVDMSD) is disordered. Residue Ser-2 is modified to N-acetylserine. Positions 7 to 24 (KLVEESREKNQPEVDMSD) are enriched in basic and acidic residues. 7 LRR repeats span residues 41–63 (HITQ…AELK), 64–85 (NLEV…ISSL), 87–109 (KLKH…GSLP), 110–133 (ALEV…FFYL), 135–156 (TLRA…IGKL), 158–179 (KLQI…IGEL), and 181–202 (QLKE…LGNL). The tract at residues 250–277 (MQANPEPPKKNNDKSKKISRKPLAAKNR) is disordered. Positions 256–265 (PPKKNNDKSK) are enriched in basic and acidic residues.

Functionally, potentially plays a role in the Ras signal transduction pathway. Capable of suppressing v-Ras transformation in vitro. The protein is Ras suppressor protein 1 (RSU1) of Homo sapiens (Human).